Reading from the N-terminus, the 271-residue chain is Troponin T, fast skeletal muscle (271 aa).

Acidic residues predominate over residues 1–21; sequence MSDEEVEHVEEEYEEEEEAQE. The interval 1–74 is disordered; it reads MSDEEVEHVE…EKVDFDDIQK (74 aa). S2 is subject to N-acetylserine. S2 bears the Phosphoserine mark. Composition is skewed to basic and acidic residues over residues 29-53 and 62-74; these read EVHE…EKPR and PEGE…DIQK. Position 90 is a phosphoserine (S90). The segment covering 113–155 has biased composition (basic and acidic residues); the sequence is RAERAEQQRIRAEKERERQNRLAEEKARREEEEAKRRAEDDLK. The segment at 113–192 is disordered; that stretch reads RAERAEQQRI…TAREMKKKVL (80 aa). Phosphoserine occurs at positions 161, 168, and 169. The segment covering 183 to 192 has biased composition (basic and acidic residues); the sequence is TAREMKKKVL. A Phosphoserine modification is found at S205. Y221 is modified (phosphotyrosine). A disordered region spans residues 249-271; sequence DQAQKHSKKAGTTPKGKVGGRWK.

Belongs to the troponin T family.

Functionally, troponin T is the tropomyosin-binding subunit of troponin, the thin filament regulatory complex which confers calcium-sensitivity to striated muscle actomyosin ATPase activity. In Sus scrofa (Pig), this protein is Troponin T, fast skeletal muscle (TNNT3).